Here is a 505-residue protein sequence, read N- to C-terminus: Actin nucleation-promoting factor WASL (505 aa).

Ser-2 carries the N-acetylserine modification. The region spanning 34–141 (LGKKCVTMSS…KAVTDLLGRR (108 aa)) is the WH1 domain. Disordered stretches follow at residues 138–163 (LGRR…ATVD) and 185–205 (TKEK…DIGT). Basic residues predominate over residues 186–198 (KEKKKGKAKKKRL). The CRIB domain maps to 203-216 (IGTPSNFQHIGHVG). A Phosphoserine; by TNK2 modification is found at Ser-242. Phosphotyrosine; by FAK1 and TNK2 is present on Tyr-256. Disordered stretches follow at residues 266 to 406 (EAVK…AGSK), 449 to 468 (SVTD…SGIV), and 477 to 505 (KRSK…EWED). Pro residues-rich tracts occupy residues 276-349 (APPP…PLPA), 356-365 (SGPPPPPPPL), and 372-391 (APPP…PPGL). Arg-307 carries the post-translational modification Omega-N-methylarginine. WH2 domains follow at residues 405–422 (SKAA…LKKV) and 433–450 (GRDA…LKSV). Phosphoserine is present on residues Ser-484 and Ser-485. Over residues 486–505 (DEDEDEDDDEDFEDDDEWED) the composition is skewed to acidic residues.

As to quaternary structure, binds actin and the Arp2/3 complex. Interacts with CDC42. Interacts with FCHSD1. Interacts with FCHSD2. Binds to SH3 domains of GRB2. Interacts with the C-terminal SH3 domain of DNMBP. Interacts with SNX9. Interacts with the WW domains of PRPF40A/FBP11. Interacts with PTK2/FAK1. Interacts with PACSIN1, PACSIN2 and PACSIN3. Interacts with NOSTRIN. Binds to TNK2. Interacts with SNX33. Interacts with NONO (via second RRM domain); the interaction is direct. Component of a multiprotein complex with NONO and SFPQ; associates with the complex via direct interaction with NONO. In terms of processing, phosphorylation at Ser-242, Tyr-256, Ser-484 and Ser-485 enhances actin polymerization activity.

Its subcellular location is the cytoplasm. The protein resides in the cytoskeleton. It localises to the nucleus. Its function is as follows. Regulates actin polymerization by stimulating the actin-nucleating activity of the Arp2/3 complex. Involved in various processes, such as mitosis and cytokinesis, via its role in the regulation of actin polymerization. Together with CDC42, involved in the extension and maintenance of the formation of thin, actin-rich surface projections called filopodia. In addition to its role in the cytoplasm, also plays a role in the nucleus by regulating gene transcription, probably by promoting nuclear actin polymerization. Binds to HSF1/HSTF1 and forms a complex on heat shock promoter elements (HSE) that negatively regulates HSP90 expression. Plays a role in dendrite spine morphogenesis. The polypeptide is Actin nucleation-promoting factor WASL (WASL) (Bos taurus (Bovine)).